Here is a 235-residue protein sequence, read N- to C-terminus: Eukaryotic translation initiation factor 4E-1 (235 aa).

Residues 1–52 (MVVEDSMKATSAEDLSNSIANQNPRGRGGDEDEELEEGEIVGDDDLDSSNLS) are disordered. Residues 13–24 (EDLSNSIANQNP) are compositionally biased toward polar residues. The segment covering 30 to 47 (DEDEELEEGEIVGDDDLD) has biased composition (acidic residues). EIF4G-binding stretches follow at residues 60–63 (HPLE) and 70–106 (FDNP…NNIH). MRNA contacts are provided by residues 78–83 (KQATWG), Lys110, and 128–129 (WE). Cys133 and Cys171 are joined by a disulfide. The tract at residues 154–163 (YTLLAMIGEQ) is EIF4G-binding. MRNA is bound by residues 178–183 (RSGQDK) and 223–227 (KKFDR).

The protein belongs to the eukaryotic initiation factor 4E family. EIF4F is a multi-subunit complex, the composition of which varies with external and internal environmental conditions. It is composed of at least EIF4A, EIF4E and EIF4G. EIF4E is also known to interact with other partners. Interacts directly with eIF4G. In higher plants two isoforms of EIF4F have been identified, named isoform EIF4F and isoform EIF(iso)4F. Isoform EIF4F has subunits p220 and p26, whereas isoform EIF(iso)4F has subunits p82 and p28. In terms of assembly, (Microbial infection) Interacts with potyvirus viral genome-linked protein (VPg); this interaction is possible in susceptible hosts but impaired in resistant plants. In terms of processing, according to the redox status, the Cys-133-Cys-171 disulfide bridge may have a role in regulating protein function by affecting its ability to bind capped mRNA.

It is found in the nucleus. The protein localises to the cytoplasm. Component of the protein complex eIF4F, which is involved in the recognition of the mRNA cap, ATP-dependent unwinding of 5'-terminal secondary structure and recruitment of mRNA to the ribosome. Recognizes and binds the 7-methylguanosine-containing mRNA cap during an early step in the initiation of protein synthesis and facilitates ribosome binding by inducing the unwinding of the mRNAs secondary structures. Key component of recessive resistance to potyviruses and Tombusviridae genus Carmovirus such as melon necrotic spot virus (MNSV). In terms of biological role, (Microbial infection) Susceptibility host factor required for viral infection by recruiting viral RNAs, including uncapped and non-polyadenylated RNA, to the host ribosomal complex via an interaction with viral genome-linked protein (VPg). The protein is Eukaryotic translation initiation factor 4E-1 of Cucumis melo (Muskmelon).